The sequence spans 303 residues: Glutathione transport system permease protein GsiD (303 aa).

A run of 6 helical transmembrane segments spans residues 40-60 (AMTA…ARWI), 105-125 (LAAG…LGLL), 144-164 (LFAF…GSGI), 165-185 (ANVI…LVRG), 222-242 (IVVF…SLSF), and 266-286 (VIAP…VLAF). The ABC transmembrane type-1 domain occupies 101 to 290 (AQISLAAGVF…LTVLAFNLLG (190 aa)).

It belongs to the binding-protein-dependent transport system permease family. The complex is composed of two ATP-binding proteins (GsiA), two transmembrane proteins (GsiC and GsiD) and a solute-binding protein (GsiB).

The protein localises to the cell inner membrane. In terms of biological role, part of the ABC transporter complex GsiABCD involved in glutathione import. Probably responsible for the translocation of the substrate across the membrane. The sequence is that of Glutathione transport system permease protein GsiD from Escherichia coli O1:K1 / APEC.